A 732-amino-acid chain; its full sequence is Polyphosphate kinase (732 aa).

Asn-61 lines the ATP pocket. Residues Arg-417 and Arg-447 each coordinate Mg(2+). His-477 serves as the catalytic Phosphohistidine intermediate. Residues Tyr-510, Arg-606, and His-634 each coordinate ATP. The segment at 699–718 is disordered; it reads DGTYRQRQPAPGEAERGTHS.

The protein belongs to the polyphosphate kinase 1 (PPK1) family. Requires Mg(2+) as cofactor. An intermediate of this reaction is the autophosphorylated ppk in which a phosphate is covalently linked to a histidine residue through a N-P bond.

It carries out the reaction [phosphate](n) + ATP = [phosphate](n+1) + ADP. Its function is as follows. Catalyzes the reversible transfer of the terminal phosphate of ATP to form a long-chain polyphosphate (polyP). The sequence is that of Polyphosphate kinase from Thermosynechococcus vestitus (strain NIES-2133 / IAM M-273 / BP-1).